Consider the following 405-residue polypeptide: MSAQPISDFYAYPDAAGHFGKFGGRFVAETLIGPLQELSAAYDQARQDPSFIAEYDKDLKHYVGRPSPIYHAERLSREVGGAQILLKREDLNHTGAHKINNTIGQALLASRMGKTRIIAETGAGQHGVASATVAARLGLECVVYMGATDIERQKINVYRMKLLGATVIPVTSGSATLKDALNEAMRDWVTNVRDTFYIIGTVAGPDPYPRMVRDFNAIVGREAREQMLQDYGRLPDAISACVGGGSNAIGLFHAFLNDPGVKIYGAEAAGDGIATGRHAASIAAGRPGVLHGNRTYVICDDDGQITETHSISAGLDYPGVGPEHSFLSDSGRAVYQGITDDEAMAAFHLLAHTEGILAALESSHAVAQSIKLARELPRDALVLCNLSGRGDKDVHTIAAREGIAL.

An N6-(pyridoxal phosphate)lysine modification is found at lysine 98.

Belongs to the TrpB family. Tetramer of two alpha and two beta chains. The cofactor is pyridoxal 5'-phosphate.

It catalyses the reaction (1S,2R)-1-C-(indol-3-yl)glycerol 3-phosphate + L-serine = D-glyceraldehyde 3-phosphate + L-tryptophan + H2O. It functions in the pathway amino-acid biosynthesis; L-tryptophan biosynthesis; L-tryptophan from chorismate: step 5/5. Its function is as follows. The beta subunit is responsible for the synthesis of L-tryptophan from indole and L-serine. This Xanthomonas euvesicatoria pv. vesicatoria (strain 85-10) (Xanthomonas campestris pv. vesicatoria) protein is Tryptophan synthase beta chain.